We begin with the raw amino-acid sequence, 122 residues long: Large ribosomal subunit protein uL14 (122 aa).

Belongs to the universal ribosomal protein uL14 family. In terms of assembly, part of the 50S ribosomal subunit. Forms a cluster with proteins L3 and L19. In the 70S ribosome, L14 and L19 interact and together make contacts with the 16S rRNA in bridges B5 and B8.

In terms of biological role, binds to 23S rRNA. Forms part of two intersubunit bridges in the 70S ribosome. This is Large ribosomal subunit protein uL14 from Mycoplasmopsis pulmonis (strain UAB CTIP) (Mycoplasma pulmonis).